Here is an 869-residue protein sequence, read N- to C-terminus: Protein translocase subunit SecA (869 aa).

ATP-binding positions include Q85, 103–107 (GEGKT), and D508.

It belongs to the SecA family. In terms of assembly, monomer and homodimer. Part of the essential Sec protein translocation apparatus which comprises SecA, SecYEG and auxiliary proteins SecDF. Other proteins may also be involved.

It localises to the cell membrane. It is found in the cytoplasm. The enzyme catalyses ATP + H2O + cellular proteinSide 1 = ADP + phosphate + cellular proteinSide 2.. Its function is as follows. Part of the Sec protein translocase complex. Interacts with the SecYEG preprotein conducting channel. Has a central role in coupling the hydrolysis of ATP to the transfer of proteins into and across the cell membrane, serving as an ATP-driven molecular motor driving the stepwise translocation of polypeptide chains across the membrane. In Deinococcus geothermalis (strain DSM 11300 / CIP 105573 / AG-3a), this protein is Protein translocase subunit SecA.